The chain runs to 348 residues: Alternative squalene epoxidase (348 aa).

The span at 1–10 (MLVDRVENNE) shows a compositional bias: basic and acidic residues. The tract at residues 1 to 26 (MLVDRVENNEKQQQQMASSSDAMSDS) is disordered. The span at 12–26 (QQQQMASSSDAMSDS) shows a compositional bias: low complexity. A run of 3 helical transmembrane segments spans residues 55 to 75 (AIAW…LLLS), 105 to 125 (LGLV…WIFF), and 153 to 173 (GLLT…YLAI). In terms of domain architecture, Fatty acid hydroxylase spans 197-332 (FMCLVLQDGI…FMWFDQLGGT (136 aa)). The short motif at 211 to 215 (HVLEH) is the Histidine box-1 element. The Histidine box-2 signature appears at 226-230 (HKPHH). Transmembrane regions (helical) follow at residues 243–263 (GSLM…ANLV) and 277–297 (SYAC…DGIF). The Histidine box-3 motif lies at 308–312 (HHVHH).

The protein belongs to the sterol desaturase family. Interacts with cytochrome b5/PHATRDRAFT_30770. Fe cation is required as a cofactor.

The protein localises to the endoplasmic reticulum membrane. It catalyses the reaction squalene + 2 Fe(II)-[cytochrome b5] + O2 + 2 H(+) = (S)-2,3-epoxysqualene + 2 Fe(III)-[cytochrome b5] + H2O. Its pathway is terpene metabolism; lanosterol biosynthesis; lanosterol from farnesyl diphosphate. With respect to regulation, the activity of this enzyme is not inhibited by terbinafine, an established inhibitor of the conventional flavoprotein squalene epoxidase. In terms of biological role, catalyzes the stereospecific epoxidation of squalene at the terminal double bond to form (S)-2,3-epoxysqualene, the first oxygenation step in sterol biosynthesis. This Phaeodactylum tricornutum (strain CCAP 1055/1) protein is Alternative squalene epoxidase.